A 152-amino-acid chain; its full sequence is Ribosomal RNA large subunit methyltransferase H (152 aa).

S-adenosyl-L-methionine is bound by residues leucine 69, glycine 96, and 118 to 123 (FGKLTF).

Belongs to the RNA methyltransferase RlmH family. Homodimer.

It is found in the cytoplasm. It catalyses the reaction pseudouridine(1915) in 23S rRNA + S-adenosyl-L-methionine = N(3)-methylpseudouridine(1915) in 23S rRNA + S-adenosyl-L-homocysteine + H(+). Functionally, specifically methylates the pseudouridine at position 1915 (m3Psi1915) in 23S rRNA. The sequence is that of Ribosomal RNA large subunit methyltransferase H from Mesomycoplasma hyopneumoniae (strain 232) (Mycoplasma hyopneumoniae).